We begin with the raw amino-acid sequence, 333 residues long: Biotin synthase (333 aa).

In terms of domain architecture, Radical SAM core spans 47–276; the sequence is FFKNQMEFCS…KSEIRLCGGR (230 aa). Cys65, Cys69, and Cys72 together coordinate [4Fe-4S] cluster. Cys109, Cys141, Cys201, and Arg271 together coordinate [2Fe-2S] cluster.

It belongs to the radical SAM superfamily. Biotin synthase family. In terms of assembly, homodimer. It depends on [4Fe-4S] cluster as a cofactor. The cofactor is [2Fe-2S] cluster.

The catalysed reaction is (4R,5S)-dethiobiotin + (sulfur carrier)-SH + 2 reduced [2Fe-2S]-[ferredoxin] + 2 S-adenosyl-L-methionine = (sulfur carrier)-H + biotin + 2 5'-deoxyadenosine + 2 L-methionine + 2 oxidized [2Fe-2S]-[ferredoxin]. It participates in cofactor biosynthesis; biotin biosynthesis; biotin from 7,8-diaminononanoate: step 2/2. Its function is as follows. Catalyzes the conversion of dethiobiotin (DTB) to biotin by the insertion of a sulfur atom into dethiobiotin via a radical-based mechanism. The sequence is that of Biotin synthase from Sulfurihydrogenibium sp. (strain YO3AOP1).